We begin with the raw amino-acid sequence, 376 residues long: MHCAQYTAGRCRSCQWLDKPYPQQLADKQHHLESLLAGHAVTQWLAPVFGRESAFRNKAKMVVSGSVERPLLGMLHRDGTPVDLCACPLYPPSFEPVFTVLKTFIARAGLTPYNVARKRGELKFLLLTESTYNGELMLRFVLRSETKLAQLIAALPWLQQQLPQLAVISANIQPVHMAILEGEREIPLTEQQALPERFNQVPLYIRPQSFFQTNPQVAASLYATARQWVQEHEVHSMWDLFCGVGGFGLHCAGPETQLTGIEINAEAIACARQSAEQLGLKNVSFAALDSTRFATAEAQIPELVLVNPPRRGIGRELCDYLSQMAPKFILYSSCNAETMAKDISLLAGYHIERVQLFDMFPHTSHYEVLTLLTLRR.

4 residues coordinate [4Fe-4S] cluster: cysteine 3, cysteine 11, cysteine 14, and cysteine 87. Residues glutamine 212, phenylalanine 241, glutamate 262, and asparagine 307 each contribute to the S-adenosyl-L-methionine site. The Nucleophile role is filled by cysteine 334.

The protein belongs to the class I-like SAM-binding methyltransferase superfamily. RNA M5U methyltransferase family. RlmC subfamily.

The enzyme catalyses uridine(747) in 23S rRNA + S-adenosyl-L-methionine = 5-methyluridine(747) in 23S rRNA + S-adenosyl-L-homocysteine + H(+). Catalyzes the formation of 5-methyl-uridine at position 747 (m5U747) in 23S rRNA. The sequence is that of 23S rRNA (uracil(747)-C(5))-methyltransferase RlmC from Yersinia pestis bv. Antiqua (strain Antiqua).